A 350-amino-acid chain; its full sequence is Putative deoxyribonuclease-2 (350 aa).

It belongs to the DNase II family.

This is Putative deoxyribonuclease-2 from Burkholderia pseudomallei (strain 1710b).